A 186-amino-acid chain; its full sequence is ATP synthase subunit b, chloroplastic (186 aa).

The chain crosses the membrane as a helical span at residues 27–43 (IFETNILNLAVVLGILL).

The protein belongs to the ATPase B chain family. F-type ATPases have 2 components, F(1) - the catalytic core - and F(0) - the membrane proton channel. F(1) has five subunits: alpha(3), beta(3), gamma(1), delta(1), epsilon(1). F(0) has four main subunits: a(1), b(1), b'(1) and c(10-14). The alpha and beta chains form an alternating ring which encloses part of the gamma chain. F(1) is attached to F(0) by a central stalk formed by the gamma and epsilon chains, while a peripheral stalk is formed by the delta, b and b' chains.

The protein resides in the plastid. Its subcellular location is the chloroplast thylakoid membrane. F(1)F(0) ATP synthase produces ATP from ADP in the presence of a proton or sodium gradient. F-type ATPases consist of two structural domains, F(1) containing the extramembraneous catalytic core and F(0) containing the membrane proton channel, linked together by a central stalk and a peripheral stalk. During catalysis, ATP synthesis in the catalytic domain of F(1) is coupled via a rotary mechanism of the central stalk subunits to proton translocation. In terms of biological role, component of the F(0) channel, it forms part of the peripheral stalk, linking F(1) to F(0). This is ATP synthase subunit b, chloroplastic from Mesostigma viride (Green alga).